The primary structure comprises 747 residues: Probable cyclic nucleotide-gated ion channel 6 (747 aa).

The Cytoplasmic portion of the chain corresponds to 1-117 (MFDTCGPKGV…DKFLLLCNKL (117 aa)). Residues 118–138 (FVASCILAVSVDPLFLYLPFI) traverse the membrane as a helical segment. The Extracellular segment spans residues 139–150 (NDKAKCVGIDRK). Residues 151–171 (LAIIVTTIRTVIDSFYLFHMA) form a helical membrane-spanning segment. Topologically, residues 172 to 205 (LRFRTAYVAPSSRVFGRGELVIDPAQIAKRYLQQ) are cytoplasmic. The chain crosses the membrane as a helical span at residues 206–226 (YFIIDLLSVLPVPQIIVWRFL). The Extracellular portion of the chain corresponds to 227 to 239 (YTSRGANVLATKQ). Residues 240 to 260 (ALRYIVLVQYIPRFLRMYPLS) traverse the membrane as a helical segment. Over 261-280 (SELKRTAGVFAETAWAGAAY) the chain is Cytoplasmic. A helical transmembrane segment spans residues 281-301 (YLLLYMLASHIVGALWYLLAL). Residues 302–407 (ERNNDCWSKA…GQGLETSTYP (106 aa)) lie on the Extracellular side of the membrane. A helical membrane pass occupies residues 408 to 428 (GEVIFSITLAIAGLLLFALLI). The Cytoplasmic portion of the chain corresponds to 429–747 (GNMQTYLQSL…PEPDFSAEDH (319 aa)). Residues 514-638 (LFEN…SRQV) and D585 each bind a nucleoside 3',5'-cyclic phosphate. Residues 630–645 (FRRLHSRQVQHTFRFY) are calmodulin-binding. An IQ domain is found at 650 to 679 (RTWAACFMQAAWRRYIKRKKLEQLRKEEEE).

It belongs to the cyclic nucleotide-gated cation channel (TC 1.A.1.5) family. As to quaternary structure, homotetramer or heterotetramer.

It localises to the cell membrane. In terms of biological role, probable cyclic nucleotide-gated ion channel. This is Probable cyclic nucleotide-gated ion channel 6 (CNGC6) from Arabidopsis thaliana (Mouse-ear cress).